Here is a 275-residue protein sequence, read N- to C-terminus: 3-oxo-isoapionate decarboxylase (275 aa).

It catalyses the reaction 3-oxoisoapionate + H(+) = L-erythrulose + CO2. Its pathway is carbohydrate metabolism. Its function is as follows. Involved in catabolism of D-apiose. Catalyzes decarboxylation of 3-oxo-isoapionate to L-erythrulose. This is 3-oxo-isoapionate decarboxylase from Pectobacterium atrosepticum (strain SCRI 1043 / ATCC BAA-672) (Erwinia carotovora subsp. atroseptica).